A 167-amino-acid chain; its full sequence is Single-stranded DNA-binding protein 2 (167 aa).

Residues 1–104 (MLNRVVLVGR…VVCDSVQFLE (104 aa)) form the SSB domain. The interval 107 to 167 (NAQQNGGQRQ…IDISDDDLPF (61 aa)) is disordered. Composition is skewed to low complexity over residues 109–118 (QQNGGQRQQN) and 132–147 (SGQN…TKQS). Positions 162 to 167 (DDDLPF) match the Important for interaction with partner proteins motif.

Homotetramer.

In terms of biological role, plays an important role in DNA replication, recombination and repair. Binds to ssDNA and to an array of partner proteins to recruit them to their sites of action during DNA metabolism. This chain is Single-stranded DNA-binding protein 2 (ssb2), found in Staphylococcus aureus (strain MSSA476).